The sequence spans 975 residues: Nesprin-3 (975 aa).

Topologically, residues 1-925 (MTQQPQDDFD…LGSLFRRACC (925 aa)) are cytoplasmic. Residues 220–325 (REHEEYQAGV…WEEEEERLRG (106 aa)) form a Spectrin 1 repeat. The stretch at 617–645 (NHQHKMDQLSSDFQALQRSLEDLVDRCRQ) forms a coiled coil. The Spectrin 2 repeat unit spans residues 647-740 (VQEHCTFSHQ…RELAESWRAL (94 aa)). Positions 917-975 (GSLFRRACCVALPLQLLLLLFLLLLFLLPIREEDRSCTLANNFARSFTLMLRYNGPPPT) constitute a KASH domain. Residues 926–946 (VALPLQLLLLLFLLLLFLLPI) traverse the membrane as a helical; Anchor for type IV membrane protein segment. The Perinuclear space segment spans residues 947 to 975 (REEDRSCTLANNFARSFTLMLRYNGPPPT).

The protein belongs to the nesprin family. In terms of assembly, core component of LINC complexes which are composed of inner nuclear membrane SUN domain-containing proteins coupled to outer nuclear membrane KASH domain-containing nesprins. SUN and KASH domain-containing proteins seem to bind each other promiscuously; however, differentially expression of LINC complex constituents can give rise to specific assemblies. Interacts with SUN1 and SUN2; probably forming respective LINC complexes. Interacts with PLEC (via actin-binding domain). Interacts with DST. Interacts with SYNE1 via spectrin repeats. Interacts (via KASH domain) with TOR1A (ATP-bound); the interaction is required for SYNE3 nuclear envelope localization. The disulfid bond with SUN1 or SUN2 is required for stability of the respective LINC complex under tensile forces. As to expression, expressed in aortic endothelial cells (at protein level).

The protein localises to the nucleus outer membrane. It is found in the nucleus envelope. Its subcellular location is the rough endoplasmic reticulum. Functionally, as a component of the LINC (LInker of Nucleoskeleton and Cytoskeleton) complex involved in the connection between the nuclear lamina and the cytoskeleton. The nucleocytoplasmic interactions established by the LINC complex play an important role in the transmission of mechanical forces across the nuclear envelope and in nuclear movement and positioning. Probable anchoring protein which tethers the nucleus to the cytoskeleton by binding PLEC which can associate with the intermediate filament system. Plays a role in the regulation of aortic epithelial cell morphology, and is required for flow-induced centrosome polarization and directional migration in aortic endothelial cells. The chain is Nesprin-3 from Homo sapiens (Human).